A 140-amino-acid chain; its full sequence is Auxin-responsive protein IAA26 (140 aa).

A disordered region spans residues 1 to 40 (MASYGDDGVELTELTLGPPGASARRARRGRKNGHPPPSSS). Residues 14 to 18 (LTLGP) carry the EAR-like (transcriptional repression) motif. Residues 24 to 33 (RRARRGRKNG) show a composition bias toward basic residues. A PB1 domain is found at 45 to 130 (AYFVKVSMDG…SCKRMRVMRA (86 aa)).

Belongs to the Aux/IAA family. As to quaternary structure, homodimers and heterodimers. In terms of tissue distribution, expressed in roots, seedlings and flowers.

It is found in the nucleus. In terms of biological role, aux/IAA proteins are short-lived transcriptional factors that function as repressors of early auxin response genes at low auxin concentrations. This Oryza sativa subsp. japonica (Rice) protein is Auxin-responsive protein IAA26 (IAA26).